Here is a 246-residue protein sequence, read N- to C-terminus: Peroxisomal membrane protein 11A (246 aa).

Residues 1–93 (MDAFIRVANQ…LCLTLANLNR (93 aa)) are Cytoplasmic-facing. The chain crosses the membrane as a helical span at residues 94–114 (VVYYICDTVLWAKSVGLTSGI). Over 115–217 (NREKWQMRAA…LNQLGIYKSN (103 aa)) the chain is Lumenal. The chain crosses the membrane as a helical span at residues 218–238 (LGVVGFGGLVSSVAGLITVVY). The interval 218–238 (LGVVGFGGLVSSVAGLITVVY) is required for homodimerization, interaction with PEX11G, and peroxisomal localization. Residues 239–246 (PQLKLKAR) lie on the Cytoplasmic side of the membrane.

Belongs to the peroxin-11 family. As to quaternary structure, homodimer. Heterodimer with PEX11G. Probably interacts with COPB2 and COPA. Interacts with PEX19. Interacts with FIS1. In terms of tissue distribution, expressed at high levels in kidney, liver, lung, brain, and testis and at low levels in heart, spleen and skeletal muscle.

The protein resides in the peroxisome membrane. Its function is as follows. May be involved in peroxisomal proliferation and may regulate peroxisomes division. May mediate binding of coatomer proteins to the peroxisomal membrane. Promotes membrane protrusion and elongation on the peroxisomal surface. The sequence is that of Peroxisomal membrane protein 11A (Pex11a) from Rattus norvegicus (Rat).